A 445-amino-acid chain; its full sequence is FAS-associated factor 2 (445 aa).

Residue Ala2 is modified to N-acetylalanine. A UBA domain is found at 12–48 (EQTEKLLQFQDLTGIESMDQCRHTLEQHNWNIEAAVQ). Position 167 is an N6-acetyllysine (Lys167). A coiled-coil region spans residues 275–350 (SERLEREERN…EEKERKLECL (76 aa)). Positions 299-361 (ASLRADQEKE…PEPSPDDPES (63 aa)) are disordered. Basic and acidic residues predominate over residues 303–348 (ADQEKERKKREERERKRRKEEEVQQQKLAEERRRRNLQEEKERKLE). The region spanning 357–439 (DDPESVKIIF…GLSHTEVLFV (83 aa)) is the UBX domain.

In terms of assembly, identified in a complex that contains SEL1L, OS9, FAF2/UBXD8, UBE2J1/UBC6E and AUP1. Interacts with YOD1. Interacts (via N-terminus) with UBQLN2 (via C-terminus). Interacts with PNPLA2 and UBAC2. Interacts with ZFAND2B; probably through VCP. Interacts with LMBR1L.

It localises to the cytoplasm. The protein localises to the lipid droplet. Its subcellular location is the endoplasmic reticulum. Its function is as follows. Plays an important role in endoplasmic reticulum-associated degradation (ERAD) that mediates ubiquitin-dependent degradation of misfolded endoplasmic reticulum proteins. By controlling the steady-state expression of the IGF1R receptor, indirectly regulates the insulin-like growth factor receptor signaling pathway. Involved in inhibition of lipid droplet degradation by binding to phospholipase PNPL2 and inhibiting its activity by promoting dissociation of PNPL2 from its endogenous activator, ABHD5 which inhibits the rate of triacylglycerol hydrolysis. Involved in stress granule disassembly: associates with ubiquitinated G3BP1 in response to heat shock, thereby promoting interaction between ubiquitinated G3BP1 and VCP, followed by G3BP1 extraction from stress granules and stress granule disassembly. The chain is FAS-associated factor 2 (FAF2) from Bos taurus (Bovine).